The chain runs to 712 residues: Patatin-like phospholipase domain-containing protein AFUA_1G04970 (712 aa).

Residues 1 to 13 (MTSDEKSATRDIY) are compositionally biased toward basic and acidic residues. The interval 1 to 20 (MTSDEKSATRDIYDPNTLPD) is disordered. The chain crosses the membrane as a helical span at residues 85-105 (WPFLFTVFAWITVLGFAYTLT). In terms of domain architecture, PNPLA spans 275 to 466 (LCLSGGATFA…RTDIPIKALN (192 aa)). A GXSXG motif is present at residues 306–310 (GTSGG). Catalysis depends on Ser-308, which acts as the Nucleophile. Catalysis depends on Asp-453, which acts as the Proton acceptor. The segment at 628 to 688 (RRRQDRAQEH…PDARRSSMFE (61 aa)) is disordered. Basic and acidic residues-rich tracts occupy residues 632–646 (DRAQEHADRMVERLD) and 652–664 (RQSDYKDESHYAE). Polar residues predominate over residues 667 to 676 (DSLSATSSRP). Residues 677–688 (HTPDARRSSMFE) are compositionally biased toward basic and acidic residues.

Belongs to the PLPL family.

It is found in the membrane. Its function is as follows. Probable lipid hydrolase. The polypeptide is Patatin-like phospholipase domain-containing protein AFUA_1G04970 (Aspergillus fumigatus (strain ATCC MYA-4609 / CBS 101355 / FGSC A1100 / Af293) (Neosartorya fumigata)).